Reading from the N-terminus, the 257-residue chain is Pyridoxine 5'-phosphate synthase (257 aa).

Asparagine 12 provides a ligand contact to 3-amino-2-oxopropyl phosphate. 14–15 contributes to the 1-deoxy-D-xylulose 5-phosphate binding site; the sequence is DH. Arginine 23 is a 3-amino-2-oxopropyl phosphate binding site. The active-site Proton acceptor is histidine 48. The 1-deoxy-D-xylulose 5-phosphate site is built by arginine 50 and histidine 55. The active-site Proton acceptor is the glutamate 75. A 1-deoxy-D-xylulose 5-phosphate-binding site is contributed by threonine 105. Catalysis depends on histidine 199, which acts as the Proton donor. Residues glycine 200 and 221–222 each bind 3-amino-2-oxopropyl phosphate; that span reads GH.

It belongs to the PNP synthase family. Homooctamer; tetramer of dimers.

The protein resides in the cytoplasm. The enzyme catalyses 3-amino-2-oxopropyl phosphate + 1-deoxy-D-xylulose 5-phosphate = pyridoxine 5'-phosphate + phosphate + 2 H2O + H(+). It functions in the pathway cofactor biosynthesis; pyridoxine 5'-phosphate biosynthesis; pyridoxine 5'-phosphate from D-erythrose 4-phosphate: step 5/5. Its function is as follows. Catalyzes the complicated ring closure reaction between the two acyclic compounds 1-deoxy-D-xylulose-5-phosphate (DXP) and 3-amino-2-oxopropyl phosphate (1-amino-acetone-3-phosphate or AAP) to form pyridoxine 5'-phosphate (PNP) and inorganic phosphate. The sequence is that of Pyridoxine 5'-phosphate synthase from Xanthobacter autotrophicus (strain ATCC BAA-1158 / Py2).